A 378-amino-acid chain; its full sequence is H repeat-associated putative transposase YhhI (378 aa).

The protein belongs to the transposase 11 family.

The chain is H repeat-associated putative transposase YhhI (yhhI) from Escherichia coli (strain K12).